Here is a 169-residue protein sequence, read N- to C-terminus: Small ribosomal subunit protein uS5 (169 aa).

One can recognise an S5 DRBM domain in the interval 15–79 (LKEQVVAINR…EAAKKNLRRI (65 aa)).

It belongs to the universal ribosomal protein uS5 family. In terms of assembly, part of the 30S ribosomal subunit. Contacts proteins S4 and S8.

Its function is as follows. With S4 and S12 plays an important role in translational accuracy. In terms of biological role, located at the back of the 30S subunit body where it stabilizes the conformation of the head with respect to the body. This is Small ribosomal subunit protein uS5 from Solibacter usitatus (strain Ellin6076).